The primary structure comprises 426 residues: DUF724 domain-containing protein 9 (426 aa).

Polar residues-rich tracts occupy residues 164 to 184 (ESSL…NANE) and 213 to 222 (PRNQNASVND). The tract at residues 164–248 (ESSLTQGSGD…REESLCSDAS (85 aa)) is disordered. Residues 223–242 (STRENENSEDINRKRKREES) show a composition bias toward basic and acidic residues. A DUF724 domain is found at 256–425 (LPFEKKLSIW…LQFQTTASAP (170 aa)). Positions 370-402 (AEKESIKIENERKILELQRLNEEVDKEIAQSKS) form a coiled coil.

In terms of tissue distribution, expressed in flowers.

It is found in the nucleus. Its function is as follows. May be involved in the polar growth of plant cells via transportation of RNAs. The sequence is that of DUF724 domain-containing protein 9 from Arabidopsis thaliana (Mouse-ear cress).